The chain runs to 623 residues: MTQKLLYVSPVESFVDTSFFQELSRLKLDIHGLSTSQITIHSYLDLKNIPSVSSACHLFLDQQSFNSEDICASSERVRLEGKLYNCNSLEEFKSLDKQQYLAEQGQKIYTKALEDINSAIGFSIISFADLKKYVFYYWVCTPLFQHENQQISILDGPEDIDASFNDKAKVWFTNHYSNWVAIVLENGDINEYTKGLNTSSIRGLLIRDTSNKQDMPSAFLRNFITIFSLDYPEAKELDVFLMRSSTIKSIKLRIRLSETEHTKLKFSGWERNSLSKLMPRAVDLSALIDPLKVAEQSVDLNLKLMKWRIAPELDLDCIRNNKVLILGSGTLGCYTARSLMAWGCRNITLVDNGRVSYSNPVRQPLFEFSDVGKEKAVAAAASLKRVFPLINAKGVQLDIPMIGHPVKDENNERKHFDALVDLIKSHDTMFLLLDSRETRWLPTLLGKFYDKIVMNAALGFDSYLIMKHGNIDDNFGCYFCNDVVVPTDSLTGRTLDQMCTVTRPGVAMLAASQAVELFVSNLQSRGQENVLGECPHQIRGFVNNFTTLKLQSPAYDNCSACSRHILNEYNKRGWDFVKQALNDNNYIEELSGLRRIKEEVENMELEGGEIKIIDSEDDGFEII.

Residues 327 to 332 carry the GXGXXG motif motif; sequence GSGTLG. Residue cysteine 499 is the Glycyl thioester intermediate of the active site.

The protein belongs to the ATG7 family. Homodimer.

It is found in the cytoplasm. Its subcellular location is the preautophagosomal structure. Its function is as follows. E1-like activating enzyme involved in the 2 ubiquitin-like systems required for cytoplasm to vacuole transport (Cvt) and autophagy. Activates ATG12 for its conjugation with ATG5 and ATG8 for its conjugation with phosphatidylethanolamine. Both systems are needed for the ATG8 association to Cvt vesicles and autophagosomes membranes. Autophagy is essential for maintenance of amino acid levels and protein synthesis under nitrogen starvation. Required for selective autophagic degradation of the nucleus (nucleophagy) as well as for mitophagy which contributes to regulate mitochondrial quantity and quality by eliminating the mitochondria to a basal level to fulfill cellular energy requirements and preventing excess ROS production. Plays a role in the regulation of filamentous growth and chronological longevity. The polypeptide is Ubiquitin-like modifier-activating enzyme ATG7 (ATG7) (Candida glabrata (strain ATCC 2001 / BCRC 20586 / JCM 3761 / NBRC 0622 / NRRL Y-65 / CBS 138) (Yeast)).